Consider the following 131-residue polypeptide: Cystatin-like cysteine protease inhibitor EPIC3 (131 aa).

Residues 1-20 (MAFTRSIALFAGLALAASSA) form the signal peptide. N-linked (GlcNAc...) asparagine glycosylation is present at N33. The Secondary area of contact signature appears at 71-75 (QTVAG).

This sequence belongs to the cystatin family.

The protein resides in the secreted. In terms of biological role, secreted effector that interacts with and inhibits host apoplastic pathogenesis-related papain-like cysteine proteases. Inhibition of host proteases by a pathogen extracellular protease inhibitor forms a specific type of defense-counterdefense mechanism between plants and microbial pathogens. The protein is Cystatin-like cysteine protease inhibitor EPIC3 of Phytophthora infestans (Potato late blight agent).